Consider the following 504-residue polypeptide: Glucose-6-phosphate isomerase (504 aa).

Residue Glu-333 is the Proton donor of the active site. Active-site residues include His-364 and Lys-473.

The protein belongs to the GPI family.

The protein localises to the cytoplasm. It catalyses the reaction alpha-D-glucose 6-phosphate = beta-D-fructose 6-phosphate. The protein operates within carbohydrate biosynthesis; gluconeogenesis. It functions in the pathway carbohydrate degradation; glycolysis; D-glyceraldehyde 3-phosphate and glycerone phosphate from D-glucose: step 2/4. Catalyzes the reversible isomerization of glucose-6-phosphate to fructose-6-phosphate. This Xanthomonas oryzae pv. oryzae (strain KACC10331 / KXO85) protein is Glucose-6-phosphate isomerase.